Reading from the N-terminus, the 61-residue chain is UPF0391 membrane protein Bpro_0066 (61 aa).

Helical transmembrane passes span Ala5 to Ala25 and Ile33 to Val53.

It belongs to the UPF0391 family.

The protein resides in the cell membrane. This Polaromonas sp. (strain JS666 / ATCC BAA-500) protein is UPF0391 membrane protein Bpro_0066.